We begin with the raw amino-acid sequence, 222 residues long: Phosphate-specific transport system accessory protein PhoU homolog 1 (222 aa).

It belongs to the PhoU family. As to quaternary structure, homodimer.

It is found in the cytoplasm. Its function is as follows. Plays a role in the regulation of phosphate uptake. In Mycobacterium leprae (strain TN), this protein is Phosphate-specific transport system accessory protein PhoU homolog 1 (phoU1).